The sequence spans 365 residues: Alanine racemase (365 aa).

The active-site Proton acceptor; specific for D-alanine is Lys35. Position 35 is an N6-(pyridoxal phosphate)lysine (Lys35). Substrate is bound at residue Arg130. The active-site Proton acceptor; specific for L-alanine is the Tyr256. Residue Met304 coordinates substrate.

The protein belongs to the alanine racemase family. The cofactor is pyridoxal 5'-phosphate.

It carries out the reaction L-alanine = D-alanine. The protein operates within amino-acid biosynthesis; D-alanine biosynthesis; D-alanine from L-alanine: step 1/1. Functionally, catalyzes the interconversion of L-alanine and D-alanine. May also act on other amino acids. This is Alanine racemase (alr) from Acidovorax sp. (strain JS42).